The sequence spans 420 residues: Gamma-glutamyl phosphate reductase (420 aa).

This sequence belongs to the gamma-glutamyl phosphate reductase family.

The protein localises to the cytoplasm. The enzyme catalyses L-glutamate 5-semialdehyde + phosphate + NADP(+) = L-glutamyl 5-phosphate + NADPH + H(+). Its pathway is amino-acid biosynthesis; L-proline biosynthesis; L-glutamate 5-semialdehyde from L-glutamate: step 2/2. Functionally, catalyzes the NADPH-dependent reduction of L-glutamate 5-phosphate into L-glutamate 5-semialdehyde and phosphate. The product spontaneously undergoes cyclization to form 1-pyrroline-5-carboxylate. The sequence is that of Gamma-glutamyl phosphate reductase from Acidiphilium cryptum (strain JF-5).